The primary structure comprises 261 residues: Small ribosomal subunit protein eS1B (261 aa).

Over residues 1–18 (MTLGKNKRISKGGKRGKK) the composition is skewed to basic residues. The tract at residues 1–23 (MTLGKNKRISKGGKRGKKKAQET) is disordered.

The protein belongs to the eukaryotic ribosomal protein eS1 family. In terms of assembly, component of the small ribosomal subunit. Mature ribosomes consist of a small (40S) and a large (60S) subunit. The 40S subunit contains about 33 different proteins and 1 molecule of RNA (18S). The 60S subunit contains about 49 different proteins and 3 molecules of RNA (25S, 5.8S and 5S).

Its subcellular location is the cytoplasm. The polypeptide is Small ribosomal subunit protein eS1B (Trypanosoma cruzi (strain CL Brener)).